The sequence spans 111 residues: MISTVALFWALCVVCIVNMARYFSSLRALLVVLRNCDPLLYQYVDGGGFFTSHGQPNKQVRLVWYIYAQRYRDHHDDEFIRRCERVRRQFILTSALCGLVVVSLIALMIWH.

Transmembrane regions (helical) follow at residues 1–21 (MIST…NMAR) and 90–110 (FILT…LMIW).

This sequence belongs to the universal stress protein B family.

It localises to the cell inner membrane. This Escherichia coli O45:K1 (strain S88 / ExPEC) protein is Universal stress protein B.